The chain runs to 461 residues: Mycosin-3 (461 aa).

The N-terminal stretch at 1-25 (MIRAAFACLAATVVVAGWWTPPAWA) is a signal peptide. In terms of domain architecture, Peptidase S8 spans 64-397 (DPGVPTPSQT…AGNLDAVAAL (334 aa)). Residues Asp-95, His-126, and Ser-342 each act as charge relay system in the active site. Residues 432-452 (AFAGAAALSVLVGLTAATVAI) traverse the membrane as a helical segment.

It belongs to the peptidase S8 family.

It is found in the cell membrane. This chain is Mycosin-3, found in Mycobacterium tuberculosis (strain ATCC 25618 / H37Rv).